Reading from the N-terminus, the 284-residue chain is MLSKQIPLGIYEKALPAGECWLERLQLAKTLGFDFVEMSVDETDERLSRLDWSREQRLALVNAIVETGVRVPSMCLSAHRRFPLGSEDDAVRAQGLEIMRKAIQFAQDVGIRVIQLAGYDVYYQEANNETRRRFRDGLKESVEMASRAQVTLAVEIMDYPLMNSISKALGYAHYLNNPWFQLYPDIGNLSAWDNDVQMELQAGIGHIVAVHVKDTKPGVFKNVPFGEGVVDFERCFETLKQSGYCGPYLIEMWSETAEDPAAEVAKARDWVKARMAKAGMVEAA.

Belongs to the L-ribulose-5-phosphate 3-epimerase family.

It catalyses the reaction L-ribulose 5-phosphate = L-xylulose 5-phosphate. The protein operates within cofactor degradation; L-ascorbate degradation; D-xylulose 5-phosphate from L-ascorbate: step 3/4. Its function is as follows. Catalyzes the isomerization of L-xylulose-5-phosphate to L-ribulose-5-phosphate. Is involved in the anaerobic L-ascorbate utilization. This Escherichia coli O157:H7 (strain EC4115 / EHEC) protein is L-ribulose-5-phosphate 3-epimerase UlaE.